A 410-amino-acid polypeptide reads, in one-letter code: Demethyl-4-deoxygadusol synthase (410 aa).

NAD(+)-binding positions include 56–58 (DAN), 87–90 (EPDK), 119–123 (GLITD), 143–144 (TT), lysine 156, lysine 165, and 183–186 (LLRT). Zn(2+) is bound by residues glutamate 198, histidine 271, and histidine 287.

Belongs to the sugar phosphate cyclases superfamily. DDGS family. As to quaternary structure, homodimer. NAD(+) is required as a cofactor. It depends on Co(2+) as a cofactor. Zn(2+) serves as cofactor.

It carries out the reaction D-sedoheptulose 7-phosphate = (R)-demethyl-4-deoxygadusol + phosphate + H2O + H(+). Its function is as follows. Catalyzes the conversion of sedoheptulose 7-phosphate to demethyl-4-deoxygadusol (DDG). Involved in the synthesis of the mycosporine-like amino acid shinorine, a natural sunscreen compound that protects the cell against UV radiation. The sequence is that of Demethyl-4-deoxygadusol synthase from Trichormus variabilis (strain ATCC 29413 / PCC 7937) (Anabaena variabilis).